The chain runs to 59 residues: Large ribosomal subunit protein bL32 (59 aa).

A disordered region spans residues 1–28; the sequence is MAVQQNKKSPSKRGMHRAHDFLTDPPLA.

Belongs to the bacterial ribosomal protein bL32 family.

This chain is Large ribosomal subunit protein bL32, found in Aromatoleum aromaticum (strain DSM 19018 / LMG 30748 / EbN1) (Azoarcus sp. (strain EbN1)).